Consider the following 548-residue polypeptide: Probable malate:quinone oxidoreductase (548 aa).

The interval 521-548 (DKPQAADSTPKPQLKPQPVQKEVADIAL) is disordered. Positions 530–541 (PKPQLKPQPVQK) are enriched in low complexity.

It belongs to the MQO family. The cofactor is FAD.

The enzyme catalyses (S)-malate + a quinone = a quinol + oxaloacetate. It functions in the pathway carbohydrate metabolism; tricarboxylic acid cycle; oxaloacetate from (S)-malate (quinone route): step 1/1. This chain is Probable malate:quinone oxidoreductase, found in Shigella boydii serotype 4 (strain Sb227).